We begin with the raw amino-acid sequence, 606 residues long: CDPK-related kinase 8 (606 aa).

Residues 1 to 14 (MGGCTSKPSTSSGR) are compositionally biased toward polar residues. The interval 1-132 (MGGCTSKPST…TEVPQREEEE (132 aa)) is disordered. G2 carries the N-myristoyl glycine lipid modification. A compositionally biased stretch (basic residues) spans 98 to 110 (KHIRAALRRRKGK). The Protein kinase domain maps to 150–412 (VELGEEIGRG…ASQALMHPWI (263 aa)). ATP is bound by residues 156-164 (IGRGHFGYT) and K182. D278 serves as the catalytic Proton acceptor. S318 is modified (phosphoserine). Residues 418-448 (DMNIPFDILIFRQMKAYLRSSSLRKAALRAL) are autoinhibitory domain. The tract at residues 437–457 (SSSLRKAALRALSKTLIKDEI) is calmodulin binding (CaMBD). 4 consecutive EF-hand domains span residues 455 to 491 (DEIL…ATEA), 492 to 527 (MKES…VHQH), 528 to 567 (ESLD…GPSI), and 570 to 599 (HSVL…VSVR). Ca(2+) is bound by residues N470, D472, E516, D545, N547, N549, E556, D581, and K583. Position 585 is a phosphoserine (S585).

This sequence belongs to the protein kinase superfamily. Ser/Thr protein kinase family. CDPK subfamily. As to quaternary structure, binds calmodulin (CaM) in a calcium-dependent manner. Post-translationally, autophosphorylated.

It is found in the membrane. It carries out the reaction L-seryl-[protein] + ATP = O-phospho-L-seryl-[protein] + ADP + H(+). The catalysed reaction is L-threonyl-[protein] + ATP = O-phospho-L-threonyl-[protein] + ADP + H(+). With respect to regulation, activated by calcium and calmodulin. Autophosphorylation may play an important role in the regulation of the kinase activity. Functionally, may play a role in signal transduction pathways that involve calcium as a second messenger. In Arabidopsis thaliana (Mouse-ear cress), this protein is CDPK-related kinase 8 (CRK8).